The sequence spans 99 residues: C-C motif chemokine 17 (99 aa).

The signal sequence occupies residues 1–23 (MIPLKMLLLVTLLLGASLQVTHA). Cystine bridges form between Cys-33–Cys-57 and Cys-34–Cys-73.

The protein belongs to the intercrine beta (chemokine CC) family. In terms of tissue distribution, expressed in thymus, spleen, lymph node, lung and heart.

It is found in the secreted. Functionally, chemokine, which displays chemotactic activity for T lymphocytes, preferentially Th2 cells, but not monocytes or granulocytes. Therefore plays an important role in a wide range of inflammatory and immunological processes. Acts by binding to CCR4 at T-cell surface. Mediates GM-CSF/CSF2-driven pain and inflammation. In the brain, required to maintain the typical, highly branched morphology of hippocampal microglia under homeostatic conditions. May be important for the appropriate adaptation of microglial morphology and synaptic plasticity to acute lipopolysaccharide (LPS)-induced neuroinflammation. Plays a role in wound healing, mainly by inducing fibroblast migration into the wound. This Canis lupus familiaris (Dog) protein is C-C motif chemokine 17 (CCL17).